A 21-amino-acid polypeptide reads, in one-letter code: Phospholipase A2 crotoxin basic chain (21 aa).

It belongs to the phospholipase A2 family. Group II subfamily. Ca(2+) is required as a cofactor. Expressed by the venom gland.

It localises to the secreted. It carries out the reaction a 1,2-diacyl-sn-glycero-3-phosphocholine + H2O = a 1-acyl-sn-glycero-3-phosphocholine + a fatty acid + H(+). Snake venom phospholipase A2 (PLA2) that induces a conspicuous local myotoxic effect and moderate footpad edema. In vitro, it shows anticoagulant effects and is not cytotoxic on myoblast but is able to lyse myotubes. PLA2 catalyzes the calcium-dependent hydrolysis of the 2-acyl groups in 3-sn-phosphoglycerides. The protein is Phospholipase A2 crotoxin basic chain of Crotalus durissus cumanensis (South American rattlesnake).